The chain runs to 398 residues: Acetate kinase (398 aa).

Asparagine 7 is a Mg(2+) binding site. Lysine 14 contributes to the ATP binding site. Arginine 85 serves as a coordination point for substrate. Aspartate 142 serves as the catalytic Proton donor/acceptor. Residues 202–206 (HLGNG), 277–279 (DMR), and 325–329 (GIGEN) each bind ATP. Residue glutamate 379 participates in Mg(2+) binding.

It belongs to the acetokinase family. In terms of assembly, homodimer. Requires Mg(2+) as cofactor. Mn(2+) is required as a cofactor.

The protein localises to the cytoplasm. The enzyme catalyses acetate + ATP = acetyl phosphate + ADP. It participates in metabolic intermediate biosynthesis; acetyl-CoA biosynthesis; acetyl-CoA from acetate: step 1/2. Functionally, catalyzes the formation of acetyl phosphate from acetate and ATP. Can also catalyze the reverse reaction. The chain is Acetate kinase from Deinococcus radiodurans (strain ATCC 13939 / DSM 20539 / JCM 16871 / CCUG 27074 / LMG 4051 / NBRC 15346 / NCIMB 9279 / VKM B-1422 / R1).